We begin with the raw amino-acid sequence, 104 residues long: Large ribosomal subunit protein bL21 (104 aa).

It belongs to the bacterial ribosomal protein bL21 family. In terms of assembly, part of the 50S ribosomal subunit. Contacts protein L20.

Functionally, this protein binds to 23S rRNA in the presence of protein L20. The protein is Large ribosomal subunit protein bL21 of Clostridium botulinum (strain 657 / Type Ba4).